A 457-amino-acid polypeptide reads, in one-letter code: MTTDEGAKNSGESPTATVAEQGEDITSKKDRGVLKIVKRVGNGEETPMIGDKVYVHYKGKLSNGKKFNSSHDRNEPFVFSLGKSQVIKAWDIGVATMKKGEICHLLCKPEYAYGSAGSVPKIPSNATLFFEIELLDFKGEDLLEDGGIIRRTKRKGEGYSNPNEGATVEIHLEGRCGERMFDCRDVAFTVGEGEDHDIPIGIDKALEKMQREEQCILYLGPRYGFGEAGKPKFGIEPNAELIYEVTLKSFEKAKESWEMDTKEKLEQAAIVKEKGTVYFKGGKYMRAVIQYGKIVSWLEMEYGLSEKESKASESFLLAAFLNLAMCYLKLREYTKAVECCDKALGLDSANEKGLYRRGEAQLLMNEFESAKGDFEKVLEVNPQNKAARLQISMCQKKAKEHNERDRRIYANMFKKFAEQDAKEEANKAMGKKTSEGVTNEKGTDSSAVEEEKAEGHV.

Met1 is subject to N-acetylmethionine. Residues 1-26 (MTTDEGAKNSGESPTATVAEQGEDIT) are disordered. Ser13 carries the post-translational modification Phosphoserine. Lys28 carries the post-translational modification N6-acetyllysine. The PPIase FKBP-type 1 domain maps to 50 to 138 (GDKVYVHYKG…FFEIELLDFK (89 aa)). Residue Lys155 is modified to N6-acetyllysine. The 87-residue stretch at 165–251 (GATVEIHLEG…IYEVTLKSFE (87 aa)) folds into the PPIase FKBP-type 2 domain. TPR repeat units follow at residues 268–301 (AAIVKEKGTVYFKGGKYMRAVIQYGKIVSWLEME), 317–350 (LAAFLNLAMCYLKLREYTKAVECCDKALGLDSAN), and 351–384 (EKGLYRRGEAQLLMNEFESAKGDFEKVLEVNPQN). The segment at 421–457 (AKEEANKAMGKKTSEGVTNEKGTDSSAVEEEKAEGHV) is disordered. A Phosphoserine modification is found at Ser445.

Part of a heteromultimeric cytoplasmic complex with HSP90AA1, HSPA1A/HSPA1B and steroid receptors. Upon ligand binding dissociates from the complex and FKBP4 takes its place. Interacts with functionally mature heterooligomeric progesterone receptor complexes along with HSP90 and TEBP. Interacts with NR3C1. Interacts with Akt/AKT1 and PHLPP1; enhancing dephosphorylation and subsequent activation of Akt/AKT1. Interacts with IFI44L; this interaction modulates the kinase activity of IKBKB and IKBKE. Interacts with IKBKB and IKBKE. Acetylation impairs ability to promote interaction between Akt/AKT1 and PHLPP1. Deacetylation by SIRT7 promotes interaction between Akt/AKT1 and PHLPP1, leading to suppress Akt/AKT1 activation. Post-translationally, ubiquitinated, leading to degradation in a proteasome-dependent manner. Deubiquitinated by USP49, leading to stabilization.

The protein resides in the cytoplasm. Its subcellular location is the nucleus. The catalysed reaction is [protein]-peptidylproline (omega=180) = [protein]-peptidylproline (omega=0). Inhibited by both FK506 and rapamycin. Functionally, immunophilin protein with PPIase and co-chaperone activities. Component of unligated steroid receptors heterocomplexes through interaction with heat-shock protein 90 (HSP90). Plays a role in the intracellular trafficking of heterooligomeric forms of steroid hormone receptors maintaining the complex into the cytoplasm when unliganded. Acts as a regulator of Akt/AKT1 activity by promoting the interaction between Akt/AKT1 and PHLPP1, thereby enhancing dephosphorylation and subsequent activation of Akt/AKT1. Interacts with IKBKE and IKBKB which facilitates IKK complex assembly leading to increased IKBKE and IKBKB kinase activity, NF-kappaB activation, and IFN production. The chain is Peptidyl-prolyl cis-trans isomerase FKBP5 (FKBP5) from Chlorocebus aethiops (Green monkey).